We begin with the raw amino-acid sequence, 158 residues long: Cyclic pyranopterin monophosphate synthase (158 aa).

Substrate contacts are provided by residues 75–77 (LCH) and 113–114 (ME). The active site involves Asp-128.

Belongs to the MoaC family. In terms of assembly, homohexamer; trimer of dimers.

The catalysed reaction is (8S)-3',8-cyclo-7,8-dihydroguanosine 5'-triphosphate = cyclic pyranopterin phosphate + diphosphate. It functions in the pathway cofactor biosynthesis; molybdopterin biosynthesis. Catalyzes the conversion of (8S)-3',8-cyclo-7,8-dihydroguanosine 5'-triphosphate to cyclic pyranopterin monophosphate (cPMP). The sequence is that of Cyclic pyranopterin monophosphate synthase from Pasteurella multocida (strain Pm70).